Here is a 467-residue protein sequence, read N- to C-terminus: 5'-nucleotidase domain-containing protein 1 (467 aa).

The Nucleophile role is filled by Asp-16. Asp-16 and Asp-18 together coordinate Mg(2+). The active-site Proton donor is Asp-18. Position 181 is an N6-acetyllysine (Lys-181). Asp-323 contacts Mg(2+).

The protein belongs to the 5'(3')-deoxyribonucleotidase family.

The protein is 5'-nucleotidase domain-containing protein 1 (Nt5dc1) of Mus musculus (Mouse).